Here is a 510-residue protein sequence, read N- to C-terminus: Probable cytosol aminopeptidase (510 aa).

The Mn(2+) site is built by Lys268 and Asp273. Residue Lys280 is part of the active site. Positions 291, 350, and 352 each coordinate Mn(2+). Arg354 is an active-site residue.

It belongs to the peptidase M17 family. It depends on Mn(2+) as a cofactor.

It localises to the cytoplasm. It carries out the reaction Release of an N-terminal amino acid, Xaa-|-Yaa-, in which Xaa is preferably Leu, but may be other amino acids including Pro although not Arg or Lys, and Yaa may be Pro. Amino acid amides and methyl esters are also readily hydrolyzed, but rates on arylamides are exceedingly low.. It catalyses the reaction Release of an N-terminal amino acid, preferentially leucine, but not glutamic or aspartic acids.. Presumably involved in the processing and regular turnover of intracellular proteins. Catalyzes the removal of unsubstituted N-terminal amino acids from various peptides. This Micrococcus luteus (strain ATCC 4698 / DSM 20030 / JCM 1464 / CCM 169 / CCUG 5858 / IAM 1056 / NBRC 3333 / NCIMB 9278 / NCTC 2665 / VKM Ac-2230) (Micrococcus lysodeikticus) protein is Probable cytosol aminopeptidase.